We begin with the raw amino-acid sequence, 375 residues long: Lipid-A-disaccharide synthase (375 aa).

Belongs to the LpxB family.

It catalyses the reaction a lipid X + a UDP-2-N,3-O-bis[(3R)-3-hydroxyacyl]-alpha-D-glucosamine = a lipid A disaccharide + UDP + H(+). The protein operates within bacterial outer membrane biogenesis; LPS lipid A biosynthesis. Condensation of UDP-2,3-diacylglucosamine and 2,3-diacylglucosamine-1-phosphate to form lipid A disaccharide, a precursor of lipid A, a phosphorylated glycolipid that anchors the lipopolysaccharide to the outer membrane of the cell. The sequence is that of Lipid-A-disaccharide synthase from Pseudomonas putida (strain W619).